The following is a 212-amino-acid chain: MLRSPYSGGHLEVVVGPMFSGKSEELIRRLTRSLIARQRVAVFKPAIDNRYHASEVASHAGRTLEAVAVPDAQAIRAQLSGQGELLSAAPEGVDVIGIDEAQFFGPELVPLVLELADAGVRVVLAGLDLDFRAEPFGSMPELLARAESVDKLTAICTVCGAPATRTQRLIGGQPARFDDPVVLVGAQESYEALPRAPHRAQGGVTTPSPLAS.

Residues 16–23 (GPMFSGKS) and 99–102 (DEAQ) each bind ATP. The active-site Proton acceptor is Glu-100.

The protein belongs to the thymidine kinase family. As to quaternary structure, homotetramer.

It localises to the cytoplasm. It catalyses the reaction thymidine + ATP = dTMP + ADP + H(+). The polypeptide is Thymidine kinase (Deinococcus radiodurans (strain ATCC 13939 / DSM 20539 / JCM 16871 / CCUG 27074 / LMG 4051 / NBRC 15346 / NCIMB 9279 / VKM B-1422 / R1)).